A 47-amino-acid polypeptide reads, in one-letter code: MSNSQAPMQAVEVRVYPIFTIRWLAVHALAIPSVFFLGAIAAMQFLR.

A helical membrane pass occupies residues 23-39; sequence WLAVHALAIPSVFFLGA. H27 serves as a coordination point for heme.

Belongs to the PsbE/PsbF family. As to quaternary structure, heterodimer of an alpha subunit and a beta subunit. PSII is composed of 1 copy each of membrane proteins PsbA, PsbB, PsbC, PsbD, PsbE, PsbF, PsbH, PsbI, PsbJ, PsbK, PsbL, PsbM, PsbT, PsbX, PsbY, Psb30/Ycf12, peripheral proteins PsbO, CyanoQ (PsbQ), PsbU, PsbV and a large number of cofactors. It forms dimeric complexes. Requires heme b as cofactor.

It is found in the cellular thylakoid membrane. Its function is as follows. This b-type cytochrome is tightly associated with the reaction center of photosystem II (PSII). PSII is a light-driven water:plastoquinone oxidoreductase that uses light energy to abstract electrons from H(2)O, generating O(2) and a proton gradient subsequently used for ATP formation. It consists of a core antenna complex that captures photons, and an electron transfer chain that converts photonic excitation into a charge separation. The chain is Cytochrome b559 subunit beta from Prochlorococcus marinus subsp. pastoris (strain CCMP1986 / NIES-2087 / MED4).